Reading from the N-terminus, the 46-residue chain is Mu-segestritoxin-Sf1c (46 aa).

Intrachain disulfides connect Cys3–Cys19, Cys10–Cys22, Cys18–Cys42, and Cys24–Cys40. The segment at Arg31–Trp33 is keys region for toxin activity.

The protein belongs to the neurotoxin 16 (SFI) family. Expressed by the venom gland.

The protein localises to the secreted. Insecticidal toxin. It inhibits insect voltage-gated sodium channels (Nav) by partially blocking the channel pore in DUM neurons from the American cockroach, not by acting as a gating modifier. The inhibition is only partially reversible after prolonged washout. In vivo, the toxin causes flaccid paralysis followed by death when injected into Heliothis virescens larvae. It also causes uncoordinated movements followed by full paralysis to sheep blowflies (Lucilia cuprina). When the toxin is fused to snowdrop lectin, it is orally active against larvae of the tomato moth (Laconobia oleracea), the rice brown planthopper (Nilaparvata lugens), and the peach-potato aphid (Myzus persicae). The chain is Mu-segestritoxin-Sf1c from Segestria florentina (Tube-web spider).